The sequence spans 595 residues: P2X purinoceptor 7 (595 aa).

Topologically, residues 1-22 (MPACCSWNDVLQYETNKVTRIQ) are cytoplasmic. C4 is lipidated: S-palmitoyl cysteine. Residues 23-46 (STNYGTVKWVLHMIVFSYISFALV) form a helical membrane-spanning segment. Residues 47–328 (SDKLYQRKEP…ILVFGTGGKF (282 aa)) are Extracellular-facing. N74 is a glycosylation site (N-linked (GlcNAc...) asparagine). 3 disulfide bridges follow: C119–C168, C129–C152, and C135–C162. An ADP-ribosylarginine; by ART2B mark is found at R125 and R133. An N-linked (GlcNAc...) asparagine glycan is attached at N187. T189 provides a ligand contact to ATP. 2 N-linked (GlcNAc...) asparagine glycosylation sites follow: N202 and N213. A disulfide bridge connects residues C216 and C226. The N-linked (GlcNAc...) asparagine glycan is linked to N241. Cysteines 260 and 269 form a disulfide. Residues R294 and K311 each contribute to the ATP site. The chain crosses the membrane as a helical span at residues 329–353 (DIIQLVVYIGSTLSYFGLATVCIDL). S342 serves as a coordination point for Na(+). Residues 354-595 (LINTYSSAFC…GQYSGFKYPY (242 aa)) lie on the Cytoplasmic side of the membrane. The segment at 360 to 377 (SAFCRSGVYPYCKCCEPC) is C-cys anchor. 3 S-palmitoyl cysteine lipidation sites follow: C363, C374, and C377. S390 is modified (phosphoserine). Positions 395–595 (KPTLKYVSFV…GQYSGFKYPY (201 aa)) are cytoplasmic ballast. Zn(2+) is bound by residues C479, C499, and C506. 4 residues coordinate GTP: R546, H547, Y550, and A567. C572 is a Zn(2+) binding site. Residues K583, S589, and G590 each contribute to the GTP site.

This sequence belongs to the P2X receptor family. As to quaternary structure, homotrimers. Interacts with LAMA3, ITGB2, ACTB, ACTN4, SVIL, MPP3, HSPA1, HSPCB, HSPA8, PIK230 and PTPRB. Interacts (via C-terminus) with EMP2. Post-translationally, phosphorylation results in its inactivation. ADP-ribosylation at Arg-125 is necessary and sufficient to activate P2RX7 and gate the channel. In terms of processing, palmitoylation of several cysteines in the C-terminal cytoplasmic tail is required for efficient localization to cell surface. Palmitoylation prevents channel desensitization by physically anchoring the palmitoylated groups to the membrane.

Its subcellular location is the cell membrane. It carries out the reaction Ca(2+)(in) = Ca(2+)(out). The enzyme catalyses K(+)(in) = K(+)(out). The catalysed reaction is Na(+)(in) = Na(+)(out). With respect to regulation, activated by high extracellular ATP levels (0.1-2.5 mM). The synthetic analog 2'(3')-O-(4-benzoylbenzoyl)ATP (BzATP) acts as a potent agonist. Does not undergo desensitization, instead, undergoes a facilitation process where currents progressively increase with repetitive or prolonged agonist application. Palmitoylation prevents channel desensitization. The permeability of the P2RX7 channel is modulated by the amount of cholesterol in the plasma membrane. ATP-gated nonselective transmembrane cation channel. Requires high millimolar-range concentrations of ATP to become activated. ATP binding trigers the rapid opening of the channel and allows Na(+) and Ca(2+) influx and K(+) efflux. Has also the ability to form a large pore in the cell membrane, allowing the passage of large cationic molecules. In microglia, may mediate NADPH transport across the plasma membrane. In immune cells, P2RX7 acts as a molecular sensor in pathological inflammatory states by detecting and responding to high local concentrations of extracellar ATP. In microglial cells, P2RX7 activation leads to the release of pro-inflammatory cytokines, such as IL-1beta and IL-18, through the activation of the NLRP3 inflammasome and caspase-1. Cooperates with KCNK6 to activate NLRP3 inflammasome. Activates death pathways leading to apoptosis and autophagy. Activates death pathways leading to pyroptosis. This is P2X purinoceptor 7 (P2rx7) from Mus musculus (Mouse).